The sequence spans 72 residues: Translation initiation factor IF-1 2 (72 aa).

The S1-like domain occupies 1-72; the sequence is MAKEDVIEMQ…TKGRIVFRTK (72 aa).

This sequence belongs to the IF-1 family. In terms of assembly, component of the 30S ribosomal translation pre-initiation complex which assembles on the 30S ribosome in the order IF-2 and IF-3, IF-1 and N-formylmethionyl-tRNA(fMet); mRNA recruitment can occur at any time during PIC assembly.

The protein localises to the cytoplasm. In terms of biological role, one of the essential components for the initiation of protein synthesis. Stabilizes the binding of IF-2 and IF-3 on the 30S subunit to which N-formylmethionyl-tRNA(fMet) subsequently binds. Helps modulate mRNA selection, yielding the 30S pre-initiation complex (PIC). Upon addition of the 50S ribosomal subunit IF-1, IF-2 and IF-3 are released leaving the mature 70S translation initiation complex. The protein is Translation initiation factor IF-1 2 of Azoarcus sp. (strain BH72).